The primary structure comprises 751 residues: Catalase-peroxidase (751 aa).

A disordered region spans residues 1–21; the sequence is MSNESKCPFHQTAGGGTTNRD. The segment at residues 90-244 is a cross-link (tryptophyl-tyrosyl-methioninium (Trp-Tyr) (with M-270)); it reads WHSAGTYRIG…LAAVQMGLIY (155 aa). Histidine 91 functions as the Proton acceptor in the catalytic mechanism. The interval 195 to 227 is disordered; sequence YGKDQVKAQPPGQGDLVAEPAKHGEEQNRDLSA. Basic and acidic residues predominate over residues 214–227; the sequence is PAKHGEEQNRDLSA. The tryptophyl-tyrosyl-methioninium (Tyr-Met) (with W-90) cross-link spans 244 to 270; sequence YVNPEGPEGNPDPVASGKDIRETFGRM. A heme b-binding site is contributed by histidine 285. Residues 365 to 387 form a disordered region; it reads AHQWRPKEGKGAGTVPDAHDPGK.

It belongs to the peroxidase family. Peroxidase/catalase subfamily. As to quaternary structure, homodimer or homotetramer. Heme b is required as a cofactor. In terms of processing, formation of the three residue Trp-Tyr-Met cross-link is important for the catalase, but not the peroxidase activity of the enzyme.

The enzyme catalyses H2O2 + AH2 = A + 2 H2O. It carries out the reaction 2 H2O2 = O2 + 2 H2O. In terms of biological role, bifunctional enzyme with both catalase and broad-spectrum peroxidase activity. This Pseudomonas putida (strain ATCC 700007 / DSM 6899 / JCM 31910 / BCRC 17059 / LMG 24140 / F1) protein is Catalase-peroxidase.